A 345-amino-acid polypeptide reads, in one-letter code: Sesquiterpene synthase PILCRDRAFT_825684 (345 aa).

D91, N226, S230, and E234 together coordinate Mg(2+). Positions 91–95 (DELTD) match the DDXXD motif motif. Residues R316 and Y317 each contribute to the (2E,6E)-farnesyl diphosphate site.

It belongs to the terpene synthase family. It depends on Mg(2+) as a cofactor.

The enzyme catalyses (2E,6E)-farnesyl diphosphate = viridiflorene + diphosphate. Functionally, terpene cyclase that catalyzes the cyclization of farnesyl diphosphate (FPP) to various sesquiterpenes, including beta-elemene, viridiflorene and gamma-cadinene. Gamma-cadinene is the major product of PILCRDRAFT_825684. The sequence is that of Sesquiterpene synthase PILCRDRAFT_825684 from Piloderma croceum (strain F 1598).